A 551-amino-acid polypeptide reads, in one-letter code: ATP synthase subunit alpha (551 aa).

174-181 (GDRQTGKT) is a binding site for ATP.

This sequence belongs to the ATPase alpha/beta chains family. In terms of assembly, F-type ATPases have 2 components, CF(1) - the catalytic core - and CF(0) - the membrane proton channel. CF(1) has five subunits: alpha(3), beta(3), gamma(1), delta(1), epsilon(1). CF(0) has three main subunits: a(1), b(2) and c(9-12). The alpha and beta chains form an alternating ring which encloses part of the gamma chain. CF(1) is attached to CF(0) by a central stalk formed by the gamma and epsilon chains, while a peripheral stalk is formed by the delta and b chains.

The protein localises to the cell inner membrane. It carries out the reaction ATP + H2O + 4 H(+)(in) = ADP + phosphate + 5 H(+)(out). Its function is as follows. Produces ATP from ADP in the presence of a proton gradient across the membrane. The alpha chain is a regulatory subunit. This is ATP synthase subunit alpha from Salinibacter ruber (strain DSM 13855 / M31).